The following is a 213-amino-acid chain: High frequency lysogenization protein HflD homolog (213 aa).

The stretch at 79–126 (QGLNAELTRYTLSLMVLERKLSSAKGALDTLGNRINGLQRQLEHFDLQ) forms a coiled coil.

It belongs to the HflD family.

Its subcellular location is the cytoplasm. It localises to the cell inner membrane. The sequence is that of High frequency lysogenization protein HflD homolog from Shigella boydii serotype 18 (strain CDC 3083-94 / BS512).